The following is a 272-amino-acid chain: MTTLSQISKSVQRHPFHLVDPSPWPFVASLCAFSCAIGGVMYMHAYVNGSFILSISFFCLLLVMFTWWRDVIRESTFEGHHTGIVQQGLRFGVILFIISEILFFFAFFWAFFHSSLAPTIEIGSIWPPKGINVLNPWEIPFLNTLILLLSGCTVTWCHHSLVSNLRNQSVLSLFLTIVLAIVFTTFQAYEYSMADFRLSDGIYGSTFYMATGFHGFHVLVGTISLAVCLIRLLQYQLTQQHHFGFESAAWYWHFVDVVWLFLFVSIYWWGGS.

7 consecutive transmembrane segments (helical) span residues 23–43 (PWPFVASLCAFSCAIGGVMYM), 45–65 (AYVNGSFILSISFFCLLLVMF), 91–111 (FGVILFIISEILFFFAFFWAF), 137–157 (WEIPFLNTLILLLSGCTVTWC), 169–189 (SVLSLFLTIVLAIVFTTFQAY), 210–230 (ATGFHGFHVLVGTISLAVCLI), and 249–269 (AWYWHFVDVVWLFLFVSIYWW).

It belongs to the cytochrome c oxidase subunit 3 family. As to quaternary structure, component of the cytochrome c oxidase (complex IV, CIV), a multisubunit enzyme composed of a catalytic core of 3 subunits and several supernumerary subunits. The complex exists as a monomer or a dimer and forms supercomplexes (SCs) in the inner mitochondrial membrane with ubiquinol-cytochrome c oxidoreductase (cytochrome b-c1 complex, complex III, CIII).

It localises to the mitochondrion inner membrane. The catalysed reaction is 4 Fe(II)-[cytochrome c] + O2 + 8 H(+)(in) = 4 Fe(III)-[cytochrome c] + 2 H2O + 4 H(+)(out). Component of the cytochrome c oxidase, the last enzyme in the mitochondrial electron transport chain which drives oxidative phosphorylation. The respiratory chain contains 3 multisubunit complexes succinate dehydrogenase (complex II, CII), ubiquinol-cytochrome c oxidoreductase (cytochrome b-c1 complex, complex III, CIII) and cytochrome c oxidase (complex IV, CIV), that cooperate to transfer electrons derived from NADH and succinate to molecular oxygen, creating an electrochemical gradient over the inner membrane that drives transmembrane transport and the ATP synthase. Cytochrome c oxidase is the component of the respiratory chain that catalyzes the reduction of oxygen to water. Electrons originating from reduced cytochrome c in the intermembrane space (IMS) are transferred via the dinuclear copper A center (CU(A)) of subunit 2 and heme A of subunit 1 to the active site in subunit 1, a binuclear center (BNC) formed by heme A3 and copper B (CU(B)). The BNC reduces molecular oxygen to 2 water molecules using 4 electrons from cytochrome c in the IMS and 4 protons from the mitochondrial matrix. The polypeptide is Cytochrome c oxidase subunit 3 (COX3) (Chondrus crispus (Carrageen Irish moss)).